The following is a 187-amino-acid chain: MTTQTSTGDRLVHQEIIGSRRLSNYLWAIIVTMGGIGFLLSGISSYLKVNLLIVADPTQLNFLPQGIAMSFYGLLGTIYGIFLWLTVIWDLGGGYNDFNQESGQIMIFRRGFPGKNRKVEFNCTTENVQSIKVDIKEGLNPRRAIYLCLKDRRQIPLTRVGQPLALSKLENEAAQLAKFLQVPLEGL.

Helical transmembrane passes span 25 to 45 (YLWA…GISS) and 69 to 89 (MSFY…TVIW).

The protein belongs to the Ycf4 family.

The protein localises to the cellular thylakoid membrane. Its function is as follows. Seems to be required for the assembly of the photosystem I complex. This is Photosystem I assembly protein Ycf4 from Trichodesmium erythraeum (strain IMS101).